We begin with the raw amino-acid sequence, 241 residues long: MMKIKIIFSYDGSAFLGSATQPHKKGVQDVLSEALSHLGIFSPLLMASRTDKGVHASYAVASVECGDHFVNLEYLQKQLNKFSHPFIHIKKIEKVKDDFEVRFDVKSREYRYIFSHSSYSPFMASYVYFYPKFDLGKANELLGFFVGKKDLKFFCKSGGDNKTTLREIFIARAYAYKDFSIFHFKANGFLRGQIRLSVASVLKVLEGKMSEKELKEQIEAKKQCNHFLAPPNGLYLSRICY.

Residue Asp-51 is the Nucleophile of the active site. Residue Tyr-110 participates in substrate binding.

It belongs to the tRNA pseudouridine synthase TruA family. In terms of assembly, homodimer.

The enzyme catalyses uridine(38/39/40) in tRNA = pseudouridine(38/39/40) in tRNA. Functionally, formation of pseudouridine at positions 38, 39 and 40 in the anticodon stem and loop of transfer RNAs. The chain is tRNA pseudouridine synthase A from Campylobacter jejuni subsp. doylei (strain ATCC BAA-1458 / RM4099 / 269.97).